A 184-amino-acid chain; its full sequence is GMP synthase [glutamine-hydrolyzing] subunit A (184 aa).

One can recognise a Glutamine amidotransferase type-1 domain in the interval proline 3–glutamate 184. Cysteine 75 (nucleophile) is an active-site residue. Active-site residues include histidine 162 and glutamate 164.

Heterodimer composed of a glutamine amidotransferase subunit (A) and a GMP-binding subunit (B).

It catalyses the reaction XMP + L-glutamine + ATP + H2O = GMP + L-glutamate + AMP + diphosphate + 2 H(+). The protein operates within purine metabolism; GMP biosynthesis; GMP from XMP (L-Gln route): step 1/1. Catalyzes the synthesis of GMP from XMP. The sequence is that of GMP synthase [glutamine-hydrolyzing] subunit A from Methanoregula boonei (strain DSM 21154 / JCM 14090 / 6A8).